The sequence spans 1341 residues: Aldehyde oxidase 4 (1341 aa).

In terms of domain architecture, 2Fe-2S ferredoxin-type spans 8-95 (DELIFFVNGK…GAAVTTVEGV (88 aa)). The [2Fe-2S] cluster site is built by Cys-47, Cys-52, Cys-55, and Cys-77. Gln-116 lines the Mo-molybdopterin pocket. [2Fe-2S] cluster is bound by residues Cys-117, Cys-120, Cys-152, and Cys-154. Residue Cys-154 participates in Mo-molybdopterin binding. The FAD-binding PCMH-type domain maps to 239–424 (FQGERTTWLA…LSVFIPYSSQ (186 aa)). Residues 267-274 (LIMGNTTV), Ala-348, Thr-357, His-361, Asp-370, and Val-414 contribute to the FAD site. Mo-molybdopterin-binding positions include Ala-805, 805-806 (AF), Leu-1046, 1087-1090 (GSMG), Gln-1202, and Leu-1266. The Proton acceptor; for azaheterocycle hydroxylase activity role is filled by Glu-1268.

The protein belongs to the xanthine dehydrogenase family. In terms of assembly, homodimer. [2Fe-2S] cluster is required as a cofactor. The cofactor is FAD. Requires Mo-molybdopterin as cofactor. As to expression, detected in liver, testis, kidney, brain, Harderian gland and olfactory mucosa.

The protein resides in the cytoplasm. The catalysed reaction is an aldehyde + O2 + H2O = a carboxylate + H2O2 + H(+). It carries out the reaction retinal + O2 + H2O = retinoate + H2O2 + H(+). In terms of biological role, aldehyde oxidase able to catalyze the oxidation of retinaldehyde into retinoate. Acts as a negative modulator of the epidermal trophism. May be able to oxidize a wide variety of aldehydes into their corresponding carboxylates and to hydroxylate azaheterocycles. This is Aldehyde oxidase 4 (AOX4) from Cavia porcellus (Guinea pig).